Here is a 137-residue protein sequence, read N- to C-terminus: Large ribosomal subunit protein bL17 (137 aa).

It belongs to the bacterial ribosomal protein bL17 family. In terms of assembly, part of the 50S ribosomal subunit. Contacts protein L32.

The sequence is that of Large ribosomal subunit protein bL17 from Caulobacter sp. (strain K31).